Reading from the N-terminus, the 162-residue chain is MLTMNDAPFWKTKSLTEMTGEEWESLCDGCGLCCLNKLEDWDTGEVVFTSVRCVLLDGESCRCSDYENRRATVPDCIQLDLKKVHEIGWLPPTCAYALVRDGKDLYWWHYLVSGDIETVHEAGISARGRTVSEAHVDVDDFEDYVVDWPLTVGEKAGEKQRT.

This sequence belongs to the UPF0260 family.

In Agrobacterium fabrum (strain C58 / ATCC 33970) (Agrobacterium tumefaciens (strain C58)), this protein is UPF0260 protein Atu0932.